The sequence spans 750 residues: MGKSESQMDITDINTPKPKKKQRWTPLEISLSVLVLLLTIIAVTMIALYATYDDGICKSSDCIKSAARLIQNMDATAEPCTDFFKYACGGWLKRNVIPETSSRYGNFDILRDELEVVLKDVLQEPKTEDIVAVQKAKTLYRSCINESAIDSRGGEPLLKLLPDVYGWPVATENWEQKYGASWTAEKAIAQLNSKYGKKVLINLFVGTDDKNSVNHVIHIDQPRLGLPSRDYYECTGIYKEACTAYVDFMISVARLIRQEERLPIDENQLALEMNKVMELEKEIANATAKPEDRNDPMLLYKKMTLAQIQNNFSLEINGKPFSWLNFTNEIMSTVNISITNEEDVVVYAPEYLTKLKPILTKYSARDLQNLMSWRFIMDLVSSLSRTYKESRNAFRKALYGTTSETATWRRCANYVNGNMENAVGRLYVEAAFAGESKHVVEDLIAQIREVFIQTLDDLTWMDAETKKRAEEKALAIKERIGYPDDIVSNDNKLNNEYLELNYKEDEYFENIIQNLKFSQSKQLKKLREKVDKDEWISGAAVVNAFYSSGRNQIVFPAGILQPPFFSAQQSNSLNYGGIGMVIGHEITHGFDDNGRNFNKDGDLVDWWTQQSASNFKEQSQCMVYQYGNFSWDLAGGQHLNGINTLGENIADNGGLGQAYRAYQNYIKKNGEEKLLPGLDLNHKQLFFLNFAQVWCGTYRPEYAVNSIKTDVHSPGNFRIIGTLQNSAEFSEAFHCRKNSYMNPEKKCRVW.

Over residues 1–14 (MGKSESQMDITDIN) the composition is skewed to polar residues. A disordered region spans residues 1–20 (MGKSESQMDITDINTPKPKK). Glycine 2 is lipidated: N-myristoyl glycine. Over 2 to 28 (GKSESQMDITDINTPKPKKKQRWTPLE) the chain is Cytoplasmic. Phosphoserine occurs at positions 4 and 6. Positions 16 to 23 (PKPKKKQR) match the Stop-transfer sequence motif. A helical; Signal-anchor for type II membrane protein transmembrane segment spans residues 29–51 (ISLSVLVLLLTIIAVTMIALYAT). Topologically, residues 52–750 (YDDGICKSSD…MNPEKKCRVW (699 aa)) are extracellular. A Peptidase M13 domain is found at 56–750 (ICKSSDCIKS…MNPEKKCRVW (695 aa)). Intrachain disulfides connect cysteine 57–cysteine 62, cysteine 80–cysteine 735, cysteine 88–cysteine 695, cysteine 143–cysteine 411, cysteine 234–cysteine 242, and cysteine 621–cysteine 747. Arginine 103 is a binding site for a peptide. Asparagine 145 carries N-linked (GlcNAc...) asparagine glycosylation. Residues asparagine 285, asparagine 311, asparagine 325, and asparagine 335 are each glycosylated (N-linked (GlcNAc...) asparagine). Histidine 584 lines the Zn(2+) pocket. Glutamate 585 is a catalytic residue. Histidine 588 contacts Zn(2+). An N-linked (GlcNAc...) asparagine glycan is attached at asparagine 628. Position 647 (glutamate 647) interacts with Zn(2+). Aspartate 651 acts as the Proton donor in catalysis.

The protein belongs to the peptidase M13 family. Zn(2+) serves as cofactor. In terms of processing, myristoylation is a determinant of membrane targeting. Post-translationally, glycosylation at Asn-628 is necessary both for surface expression and neutral endopeptidase activity.

It localises to the cell membrane. The enzyme catalyses Preferential cleavage of polypeptides between hydrophobic residues, particularly with Phe or Tyr at P1'.. The catalysed reaction is substance P + H2O = substance P(1-9) + L-Leu-L-Met-NH2. It catalyses the reaction substance P + H2O = substance P(1-7) + L-Phe-Gly-L-Leu-L-Met-NH2. It carries out the reaction neurotensin + H2O = neurotensin(1-11) + L-isoleucyl-L-leucine. The enzyme catalyses neurotensin + H2O = neurotensin(1-10) + L-tyrosyl-L-isoleucyl-L-leucine. Its function is as follows. Thermolysin-like specificity, but is almost confined on acting on polypeptides of up to 30 amino acids. Biologically important in the destruction of opioid peptides such as Met- and Leu-enkephalins by cleavage of a Gly-Phe bond. Catalyzes cleavage of bradykinin, substance P and neurotensin peptides. Able to cleave angiotensin-1, angiotensin-2 and angiotensin 1-9. Involved in the degradation of atrial natriuretic factor (ANF) and brain natriuretic factor (BNP(1-32)). Displays UV-inducible elastase activity toward skin preelastic and elastic fibers. The polypeptide is Neprilysin (MME) (Pongo abelii (Sumatran orangutan)).